The sequence spans 182 residues: Ribosome-recycling factor (182 aa).

A disordered region spans residues 136–156; it reads IRKQEKNSDISKDESRDLQDK.

This sequence belongs to the RRF family.

The protein resides in the cytoplasm. Its function is as follows. Responsible for the release of ribosomes from messenger RNA at the termination of protein biosynthesis. May increase the efficiency of translation by recycling ribosomes from one round of translation to another. This chain is Ribosome-recycling factor, found in Trichodesmium erythraeum (strain IMS101).